Reading from the N-terminus, the 84-residue chain is Acetylcholine receptor subunit alpha (84 aa).

Intrachain disulfides connect Cys7–Cys21 and Cys71–Cys72. Residue Asn20 is glycosylated (N-linked (GlcNAc...) asparagine).

This sequence belongs to the ligand-gated ion channel (TC 1.A.9) family. Acetylcholine receptor (TC 1.A.9.1) subfamily. Alpha-1/CHRNA1 sub-subfamily. In terms of assembly, one of the alpha chains that assemble within the acetylcholine receptor, a pentamer of two alpha chains, a beta, a delta, and a gamma (in immature muscle) or epsilon (in mature muscle) chains. The muscle heteropentamer composed of alpha-1, beta-1, delta, epsilon subunits interacts with the alpha-conotoxin ImII.

Its subcellular location is the postsynaptic cell membrane. The protein resides in the cell membrane. The catalysed reaction is K(+)(in) = K(+)(out). The enzyme catalyses Na(+)(in) = Na(+)(out). Upon acetylcholine binding, the AChR responds by an extensive change in conformation that affects all subunits and leads to opening of an ion-conducting channel across the plasma membrane. This Crocidura russula (Greater white-toothed shrew) protein is Acetylcholine receptor subunit alpha (CHRNA1).